The following is a 115-amino-acid chain: uncharacterized protein (115 aa).

The disordered stretch occupies residues 1 to 74 (MGTGLRSQSL…VPGSLGDTEQ (74 aa)).

This is an uncharacterized protein from Homo sapiens (Human).